The following is a 417-amino-acid chain: Squalene synthase (417 aa).

NADP(+) contacts are provided by arginine 52 and arginine 77. 3 residues coordinate Mg(2+): aspartate 80, glutamate 83, and aspartate 84. Residue arginine 218 participates in NADP(+) binding. A helical transmembrane segment spans residues 284–304 (SVFNFCAIPQVMAIATLAACY). The NADP(+) site is built by lysine 315 and arginine 317. A helical transmembrane segment spans residues 384–404 (PIYLSFVMLLAALSWQYLTTL).

The protein belongs to the phytoene/squalene synthase family. The cofactor is Mg(2+). As to expression, widely expressed.

It is found in the endoplasmic reticulum membrane. It carries out the reaction 2 (2E,6E)-farnesyl diphosphate + NADPH + H(+) = squalene + 2 diphosphate + NADP(+). The enzyme catalyses 2 (2E,6E)-farnesyl diphosphate + NADH + H(+) = squalene + 2 diphosphate + NAD(+). The catalysed reaction is 2 (2E,6E)-farnesyl diphosphate = presqualene diphosphate + diphosphate. It catalyses the reaction presqualene diphosphate + NADH + H(+) = squalene + diphosphate + NAD(+). It carries out the reaction presqualene diphosphate + NADPH + H(+) = squalene + diphosphate + NADP(+). It participates in terpene metabolism; lanosterol biosynthesis; lanosterol from farnesyl diphosphate: step 1/3. Its function is as follows. Catalyzes the condensation of 2 farnesyl pyrophosphate (FPP) moieties to form squalene. Proceeds in two distinct steps. In the first half-reaction, two molecules of FPP react to form the stable presqualene diphosphate intermediate (PSQPP), with concomitant release of a proton and a molecule of inorganic diphosphate. In the second half-reaction, PSQPP undergoes heterolysis, isomerization, and reduction with NADPH or NADH to form squalene. It is the first committed enzyme of the sterol biosynthesis pathway. This chain is Squalene synthase (FDFT1), found in Homo sapiens (Human).